We begin with the raw amino-acid sequence, 569 residues long: Acetate/butyrate--CoA ligase AAE7, peroxisomal (569 aa).

Positions 567 to 569 (SRL) match the Microbody targeting signal motif.

Belongs to the ATP-dependent AMP-binding enzyme family. In terms of tissue distribution, expressed in roots, leaves, stems, flowers and developing seeds.

The protein resides in the peroxisome. The enzyme catalyses acetate + ATP + CoA = acetyl-CoA + AMP + diphosphate. The catalysed reaction is a medium-chain fatty acid + ATP + CoA = a medium-chain fatty acyl-CoA + AMP + diphosphate. Its function is as follows. Peroxisomal acetate/butyrate--CoA ligase that is probably involved in the activation of exogenous acetate for entry into the glyoxylate cycle. May play a role to prevent carbon loss from peroxisomes during lipid mobilization. In vitro, is active with both acetate and butyrate. The sequence is that of Acetate/butyrate--CoA ligase AAE7, peroxisomal (AAE7) from Arabidopsis thaliana (Mouse-ear cress).